A 442-amino-acid chain; its full sequence is Elongation factor 1-alpha (442 aa).

One can recognise a tr-type G domain in the interval 6 to 229 (KPHMNLIVIG…ALDNLKPPSV (224 aa)). The interval 15–22 (GHVDHGKS) is G1. 15 to 22 (GHVDHGKS) serves as a coordination point for GTP. Position 22 (serine 22) interacts with Mg(2+). A G2 region spans residues 71–75 (GVTID). Positions 92-95 (DAPG) are G3. GTP-binding positions include 92-96 (DAPGH) and 154-157 (NKMD). Residues 154-157 (NKMD) form a G4 region. The interval 195 to 197 (SAW) is G5.

This sequence belongs to the TRAFAC class translation factor GTPase superfamily. Classic translation factor GTPase family. EF-Tu/EF-1A subfamily.

It is found in the cytoplasm. It catalyses the reaction GTP + H2O = GDP + phosphate + H(+). GTP hydrolase that promotes the GTP-dependent binding of aminoacyl-tRNA to the A-site of ribosomes during protein biosynthesis. This chain is Elongation factor 1-alpha, found in Ignicoccus hospitalis (strain KIN4/I / DSM 18386 / JCM 14125).